The sequence spans 393 residues: Flavohemoprotein (393 aa).

Residues 1-139 (MLSAEHRAIV…LADLLIGLEE (139 aa)) enclose the Globin domain. H85 lines the heme b pocket. Catalysis depends on charge relay system residues Y95 and E138. The reductase stretch occupies residues 150–393 (GGWRGTRAFV…EFFGPASALD (244 aa)). Positions 153–256 (RGTRAFVVAR…LTPSGDFTLE (104 aa)) constitute an FAD-binding FR-type domain. Residues Y191 and 205-208 (RNYS) each bind FAD. 268 to 273 (GVGITP) serves as a coordination point for NADP(+). FAD is bound at residue 385 to 388 (FFGP).

The protein belongs to the globin family. Two-domain flavohemoproteins subfamily. In the C-terminal section; belongs to the flavoprotein pyridine nucleotide cytochrome reductase family. Requires heme b as cofactor. FAD serves as cofactor.

It catalyses the reaction 2 nitric oxide + NADPH + 2 O2 = 2 nitrate + NADP(+) + H(+). It carries out the reaction 2 nitric oxide + NADH + 2 O2 = 2 nitrate + NAD(+) + H(+). In terms of biological role, is involved in NO detoxification in an aerobic process, termed nitric oxide dioxygenase (NOD) reaction that utilizes O(2) and NAD(P)H to convert NO to nitrate, which protects the bacterium from various noxious nitrogen compounds. Therefore, plays a central role in the inducible response to nitrosative stress. The protein is Flavohemoprotein of Burkholderia sp. (strain TH2).